A 375-amino-acid polypeptide reads, in one-letter code: D-aspartate oxidase (375 aa).

The N-terminal stretch at 1-17 (MATVCVVGSGILGLAVA) is a signal peptide. Residues serine 9, leucine 12, aspartate 34, serine 51, and glycine 55 each contribute to the FAD site. N-linked (GlcNAc...) asparagine glycosylation is present at asparagine 203. Positions 322, 354, and 355 each coordinate FAD.

It belongs to the DAMOX/DASOX family. FAD serves as cofactor.

It carries out the reaction D-aspartate + O2 + H2O = oxaloacetate + H2O2 + NH4(+). The catalysed reaction is D-glutamate + O2 + H2O = H2O2 + 2-oxoglutarate + NH4(+). Its function is as follows. Selectively catalyzes the oxidative deamination of acidic amino acids. Protects the organism from the toxicity of D-amino acids. Enables the organism to utilize D-amino acids as a source of nutrients. Enables the organism to utilize D-aspartate as a nitrogen source. The polypeptide is D-aspartate oxidase (DDO) (Komagataella phaffii (strain GS115 / ATCC 20864) (Yeast)).